Reading from the N-terminus, the 1099-residue chain is MADPSFSYTLHYPPVDGSLLFPEIIAFNAEHNSNVPFFVFPEDGSANGVVSISHLEFYRACHRVAHALRPNRAGPDGEIIAIIAMTDTIQYFALLVGVIIAGYIPFPMSPRNSAAAVSNLLLKTSCHRLITTQHSLQPLLDGIKSELGSFNFSFQDVPCLAHIYPKLGLETIDDPFEPFPARPSRPSASEVMMYLHSSGSTGFPKAIPQTHQTVIHWCAAAPVVDTKLYPADTCLGVMLLPSFHTLGIICSLYLPLITLRSVSVYAPTSYNDPKAIPVIPTSENILEGVQRTNCNALMAVPAFIELWALSPSAIEILKSLRFLASSGGPLSEKVGNALASVGVPLVNVYGGTECGGLNSMFRRKDEVCDWVWINLSPRVMFRWVPQGEGLYECQILQSEMHRVSVENLPDVKGYATSDIFLKHPTKEGLWKLVGRKDDIIVLSSGEKTVPAPMENTIASNPVVGGTVMFGRARNHVGILIEPRQGFDVNIDDPKQVAAFRNRIWPEVEEANKAAAAFSRIFKEMILITRPDKPLPRTGKGTVMRKAAVTIYDKEIDALYDTVEASTTVNKDVELPKDWSEESLVVWLGEHAARVNSDKKVDPEVDVFEQGFDSLTATFLRNRIIGSLSSSTDSNVRTTARQIDQNIVFSNPTIKRLSQALARVVSNPQFTGKEGSLINRKVELENTLAMYSEGLPGTLSPQVEQPNGDGHSCHVVLLTGSTGGLGSYLLASLLENEQVSLVYAFNRSSKDGKSSEERQKAGFEDRGLDIALLSSPKLRYIEGDAAQDKLGLGDATYDKLRTSINVIIHNAWRLDFSLSLSSFGSNIKGTRNLVDLALSSPNAPSLRFLFTSSISSAQGWDKSKGACPEEVLFDANVASGGSGYGASKYVCERILEKSGLQASSFRIGQISGGQPRGAWSVTDWFPMLVKSSLALGALPVAKGVVSWLPPHAVSQAILDVAFAKAKPPPVINLVHPRPVQWAALMQSIGDALVHNNLLTKPLPIVAFEEWFSRLEQKAIGASADDFKEMPALKLLPFMRMIAQSDKSIRKVTSDGEAGGFVVFSTTKAQQLSRTMRELAPITAEDVALWMKYWASKGMFM.

The adenylation (A) domain stretch occupies residues 29-360 (AEHNSNVPFF…GTECGGLNSM (332 aa)). AMP contacts are provided by residues histidine 244, 347–348 (NV), threonine 352, and 432–435 (LVGR). A Carrier domain is found at 578–664 (WSEESLVVWL…RLSQALARVV (87 aa)). O-(pantetheine 4'-phosphoryl)serine is present on serine 613. Residues 717-952 (LTGSTGGLGS…VVSWLPPHAV (236 aa)) form a reductase (R) domain region. NADP(+) is bound by residues 721–724 (TGGL), 809–811 (NAW), tyrosine 883, and lysine 887.

Belongs to the adenylate-forming reductase family.

In terms of biological role, adenylate-forming reductase, a natural product biosynthesis enzyme that resembles non-ribosomal peptide synthetases, yet serves to modify one substrate, rather than to condense two or more building blocks. The A-domain preferentially accepts benzoic acid as substrate. The natural product of the enzyme is not yet known. The chain is Adenylate-forming reductase Nps11 from Serpula lacrymans var. lacrymans (strain S7.9) (Dry rot fungus).